The sequence spans 801 residues: Xaa-Pro dipeptidyl-peptidase (801 aa).

Residues serine 371, aspartate 491, and histidine 522 each act as charge relay system in the active site.

This sequence belongs to the peptidase S15 family. In terms of assembly, homodimer.

Its subcellular location is the cytoplasm. The catalysed reaction is Hydrolyzes Xaa-Pro-|- bonds to release unblocked, N-terminal dipeptides from substrates including Ala-Pro-|-p-nitroanilide and (sequentially) Tyr-Pro-|-Phe-Pro-|-Gly-Pro-|-Ile.. Removes N-terminal dipeptides sequentially from polypeptides having unsubstituted N-termini provided that the penultimate residue is proline. This Ligilactobacillus salivarius (strain UCC118) (Lactobacillus salivarius) protein is Xaa-Pro dipeptidyl-peptidase.